A 172-amino-acid polypeptide reads, in one-letter code: Large ribosomal subunit protein uL10 (172 aa).

The protein belongs to the universal ribosomal protein uL10 family. As to quaternary structure, part of the ribosomal stalk of the 50S ribosomal subunit. The N-terminus interacts with L11 and the large rRNA to form the base of the stalk. The C-terminus forms an elongated spine to which L12 dimers bind in a sequential fashion forming a multimeric L10(L12)X complex.

In terms of biological role, forms part of the ribosomal stalk, playing a central role in the interaction of the ribosome with GTP-bound translation factors. The polypeptide is Large ribosomal subunit protein uL10 (Chlorobium chlorochromatii (strain CaD3)).